Consider the following 564-residue polypeptide: Protein NRT1/ PTR FAMILY 5.16 (564 aa).

2 helical membrane passes run 49–69 (FAYFGIGSNLITYLTGPLGQS) and 80–100 (WSGTASILPVLGAFIADAYLG). The residue at position 104 (T104) is a Phosphothreonine. Transmembrane regions (helical) follow at residues 110 to 130 (LIYILGLGLLTLSSILILMGL), 145 to 165 (FFWVNILFFCSLYLVAIGQGG), 192 to 212 (FFNWWFLSLSAGITLSIIVVV), 220 to 240 (WALGFGIPCLFMVMALALFLF), 327 to 347 (IPIWITSVVSTIPYAQYATFF), 358 to 378 (ILPGFEIPPASFQALIGLSIF), 408 to 428 (IGAGMVLSSLNMVVAALVEMK), 450 to 470 (IWWFVPQYLLLGMIDVFSLVG), 486 to 506 (IGLALSLSAMGLASFLSGFLI), and 533 to 553 (YFYWLLAAFTAIGFLAFLLLS).

This sequence belongs to the major facilitator superfamily. Proton-dependent oligopeptide transporter (POT/PTR) (TC 2.A.17) family. As to expression, expressed in shoots and roots.

The protein resides in the membrane. This Arabidopsis thaliana (Mouse-ear cress) protein is Protein NRT1/ PTR FAMILY 5.16 (NPF5.16).